Consider the following 292-residue polypeptide: Peroxidase 2 (292 aa).

Disulfide bonds link cysteine 7-cysteine 86, cysteine 40-cysteine 45, cysteine 92-cysteine 288, and cysteine 171-cysteine 199. Catalysis depends on histidine 38, which acts as the Proton acceptor. Ca(2+)-binding residues include aspartate 39, valine 42, glycine 44, aspartate 46, and serine 48. Residue asparagine 68 is glycosylated (N-linked (GlcNAc...) asparagine). Proline 134 provides a ligand contact to substrate. Asparagine 139 carries an N-linked (GlcNAc...) asparagine glycan. Histidine 164 contacts heme b. Position 165 (threonine 165) interacts with Ca(2+). Asparagine 179 carries N-linked (GlcNAc...) asparagine glycosylation. Residues aspartate 210, threonine 213, and aspartate 218 each coordinate Ca(2+).

It belongs to the peroxidase family. Classical plant (class III) peroxidase subfamily. The cofactor is Ca(2+). Requires heme b as cofactor.

The enzyme catalyses 2 a phenolic donor + H2O2 = 2 a phenolic radical donor + 2 H2O. Functionally, removal of H(2)O(2), oxidation of toxic reductants, biosynthesis and degradation of lignin, suberization, auxin catabolism, response to environmental stresses such as wounding, pathogen attack and oxidative stress. These functions might be dependent on each isozyme/isoform in each plant tissue. The protein is Peroxidase 2 of Cucumis sativus (Cucumber).